We begin with the raw amino-acid sequence, 395 residues long: Elongation factor Tu (395 aa).

The tr-type G domain maps to 10 to 204 (KPHVNIGTIG…IVDEYIPTPE (195 aa)). The segment at 19–26 (GHVDHGKT) is G1. 19 to 26 (GHVDHGKT) contacts GTP. T26 is a Mg(2+) binding site. The tract at residues 60–64 (GITIN) is G2. A G3 region spans residues 81–84 (DAPG). Residues 81–85 (DAPGH) and 136–139 (NKAD) contribute to the GTP site. Positions 136–139 (NKAD) are G4. The interval 174–176 (SAL) is G5.

The protein belongs to the TRAFAC class translation factor GTPase superfamily. Classic translation factor GTPase family. EF-Tu/EF-1A subfamily. As to quaternary structure, monomer.

It localises to the cytoplasm. The catalysed reaction is GTP + H2O = GDP + phosphate + H(+). Its function is as follows. GTP hydrolase that promotes the GTP-dependent binding of aminoacyl-tRNA to the A-site of ribosomes during protein biosynthesis. The protein is Elongation factor Tu of Lactococcus lactis subsp. lactis (strain IL1403) (Streptococcus lactis).